Consider the following 475-residue polypeptide: MEFIILSLLLLSLALYSLYYVIIKPKPTTQNLPPGRKGWPFIGETLEYHALSKKGCIEKFMSQRMQKYSSKIFKTSYLGADMVFLCSAEGNKLLFSNEHKLFKPWLPRIIENSFKSSPNITLQDEFNSLRRVIGSFTEPNALRRYVGMMDANAKRHLRKYWDGNDVVKVHDLSRKFIFALCSELMYNIHDTRTADELENLAHCIMTEFFIIPVNIPGTKFGRAVRAGREFHQRFRNMIKQRRLEIEEKREPEHKDILSLLLLEKNKDGEDLTESEIALKMQAVLIGAYDNPSIAISTIIKFLAELPEIYEQVLREQMEIANSKGPDELLSFDDLKRMKYTWNVISEVLRMEPPNSGTFREALTEVTIDGYTIPKGFKLHWAVNATHKDPECFPNPEKFDPSRYQGNDIVPFSYVPFGAGPHICPGKEFARLKLLVFFHNLVRKFRWEKIIPDEKMIRNPNLMPEKGLPVRLYPNN.

A helical membrane pass occupies residues 3-23 (FIILSLLLLSLALYSLYYVII). C423 provides a ligand contact to heme.

The protein belongs to the cytochrome P450 family. Heme is required as a cofactor. As to expression, expressed in flowers, maturing fruits and in juice vesicles.

The protein resides in the membrane. It catalyses the reaction (21S)-21-acetoxyl-apo-melianone + reduced [NADPH--hemoprotein reductase] + O2 = luvungin A + oxidized [NADPH--hemoprotein reductase] + H2O + H(+). Its pathway is secondary metabolite biosynthesis; terpenoid biosynthesis. Functionally, monooxygenase involved in the biosynthesis of limonoids triterpene natural products such as limonin, a compound with insecticidal activity responsible for the bitter taste in citrus. Catalyzes the conversion of (21S)-21-acetoxyl-apo-melianone to luvungin A. In Citrus sinensis (Sweet orange), this protein is Luvungin A synthase CYP716AC1.